Reading from the N-terminus, the 949-residue chain is Collagen alpha-2(I) chain (949 aa).

Positions 1 to 949 are disordered; that stretch reads SGGFDFSFLP…FGYEGDFYRA (949 aa). 4-hydroxyproline occurs at positions 10, 13, 34, and 40. Residues 27-66 are compositionally biased toward low complexity; that stretch reads LMGPRGPPGASGAPGPQGFQGPAGEPGEPGQTGPAGARGP. K95 carries the 5-hydroxylysine; alternate modification. A glycan (O-linked (Gal...) hydroxylysine; alternate) is linked at K95. Composition is skewed to low complexity over residues 147 to 162 and 208 to 229; these read SVGPVGPAGPIGSAGP and PGANGLTGAKGAAGLPGVAGAP. The segment covering 263–272 has biased composition (gly residues); the sequence is GESGGKGEPG. A compositionally biased stretch (low complexity) spans 273–283; it reads SAGPQGPPGSS. Positions 292 to 313 are enriched in gly residues; that stretch reads NGEGSTGPTGPPGLRGGPGSRG. P348 and P351 each carry 4-hydroxyproline. Positions 377–396 are enriched in low complexity; that stretch reads LPGIDGRPGPIGPAGARGEA. Gly residues predominate over residues 435-444; the sequence is GVQGGKGEQG. Low complexity-rich tracts occupy residues 490 to 507 and 519 to 529; these read PGESGAVGPSGAIGSRGP and EPGVVGAPGTA. Gly residues predominate over residues 530–539; the sequence is GPAGSGGLPG. Composition is skewed to low complexity over residues 562-606 and 613-633; these read VGTT…PRGS and VGPAGPNGFAGPAGAAGQPGA. Residues 634 to 643 are compositionally biased toward basic and acidic residues; the sequence is KGERGTKGPK. The segment covering 651-661 has biased composition (low complexity); the sequence is PTGPVGSAGPA. Residues 671–680 show a composition bias toward gly residues; that stretch reads GSRGDGGPPG. Over residues 682-691 the composition is skewed to low complexity; sequence TGFPGAAGRT. Over residues 722–736 the composition is skewed to gly residues; that stretch reads GPVGRGETGAGGPPG. 3 stretches are compositionally biased toward low complexity: residues 737–771, 779–792, and 810–825; these read FTGEKGPSGEPGTAGPPGTAGPQGLLGAPGILGLP, LPGVAGAVGEPGPL, and EPGPVGSVGPVGALGP. Basic and acidic residues predominate over residues 835 to 846; sequence RGDKGEPGEKGP. Pro residues predominate over residues 921–931; it reads PAGPPGPPGPP.

This sequence belongs to the fibrillar collagen family. Trimers of one alpha 2(I) and two alpha 1(I) chains. Interacts (via C-terminus) with TMEM131 (via PapD-L domain); the interaction is direct and is involved in assembly and TRAPPIII ER-to-Golgi transport complex-dependent secretion of collagen. In terms of processing, prolines at the third position of the tripeptide repeating unit (G-X-Y) are hydroxylated in some or all of the chains. Expressed in bones.

It is found in the secreted. It localises to the extracellular space. Its subcellular location is the extracellular matrix. Type I collagen is a member of group I collagen (fibrillar forming collagen). The protein is Collagen alpha-2(I) chain of Acratocnus ye (Hispaniolan ground sloth).